The sequence spans 537 residues: Formimidoyltransferase-cyclodeaminase (537 aa).

The tract at residues 1–181 (MNKLVECVPN…GASVTGARSF (181 aa)) is formiminotransferase N-subdomain. The For formimidoyltransferase activity role is filled by histidine 82. Residue 163–172 (GPAKFIPSYG) coordinates folate. The formiminotransferase C-subdomain stretch occupies residues 182–326 (LIAYNVNILG…PKKRIIDYMV (145 aa)). The linker stretch occupies residues 327-335 (QEDLKVTQP). The interval 336-537 (LASMSVRGFV…VLEILSNRKE (202 aa)) is cyclodeaminase/cyclohydrolase. Residue aspartate 413 is the For cyclodeaminase activity of the active site.

In the C-terminal section; belongs to the cyclodeaminase/cyclohydrolase family. This sequence in the N-terminal section; belongs to the formiminotransferase family. Homooctamer, including four polyglutamate binding sites. The subunits are arranged as a tetramer of dimers, and form a planar ring-shaped structure.

It is found in the cytoplasm. It localises to the cytosol. Its subcellular location is the golgi apparatus. The protein resides in the cytoskeleton. The protein localises to the microtubule organizing center. It is found in the centrosome. It localises to the centriole. It catalyses the reaction 5-formimidoyltetrahydrofolate + L-glutamate = N-formimidoyl-L-glutamate + (6S)-5,6,7,8-tetrahydrofolate. The enzyme catalyses 5-formimidoyltetrahydrofolate + 2 H(+) = (6R)-5,10-methenyltetrahydrofolate + NH4(+). It functions in the pathway amino-acid degradation; L-histidine degradation into L-glutamate; L-glutamate from N-formimidoyl-L-glutamate (transferase route): step 1/1. Functionally, folate-dependent enzyme, that displays both transferase and deaminase activity. Serves to channel one-carbon units from formiminoglutamate to the folate pool. The polypeptide is Formimidoyltransferase-cyclodeaminase (ftcd) (Dictyostelium discoideum (Social amoeba)).